The chain runs to 360 residues: Aminomethyltransferase (360 aa).

It belongs to the GcvT family. In terms of assembly, the glycine cleavage system is composed of four proteins: P, T, L and H.

The enzyme catalyses N(6)-[(R)-S(8)-aminomethyldihydrolipoyl]-L-lysyl-[protein] + (6S)-5,6,7,8-tetrahydrofolate = N(6)-[(R)-dihydrolipoyl]-L-lysyl-[protein] + (6R)-5,10-methylene-5,6,7,8-tetrahydrofolate + NH4(+). Functionally, the glycine cleavage system catalyzes the degradation of glycine. This chain is Aminomethyltransferase, found in Pseudomonas putida (strain ATCC 47054 / DSM 6125 / CFBP 8728 / NCIMB 11950 / KT2440).